The following is a 273-amino-acid chain: tRNA (guanine-N(7)-)-methyltransferase (273 aa).

The interval 1–32 (MSATAKKSAAQLQREEEEARKKLKRLSKQGGV) is disordered. S-adenosyl-L-methionine contacts are provided by residues Gly-88, 111–112 (EI), 150–151 (NC), and Cys-170. The active site involves Asp-173. 248–250 (TEE) is a binding site for S-adenosyl-L-methionine.

Belongs to the class I-like SAM-binding methyltransferase superfamily. TrmB family. Forms a complex with trm82.

It localises to the nucleus. It carries out the reaction guanosine(46) in tRNA + S-adenosyl-L-methionine = N(7)-methylguanosine(46) in tRNA + S-adenosyl-L-homocysteine. Its pathway is tRNA modification; N(7)-methylguanine-tRNA biosynthesis. In terms of biological role, catalyzes the formation of N(7)-methylguanine at position 46 (m7G46) in tRNA. The sequence is that of tRNA (guanine-N(7)-)-methyltransferase (trm8) from Schizosaccharomyces pombe (strain 972 / ATCC 24843) (Fission yeast).